The following is a 311-amino-acid chain: Catechol 1,2-dioxygenase (311 aa).

Y164 contributes to the catechol binding site. The Fe cation site is built by Y164, Y200, H224, and H226. 224 to 226 provides a ligand contact to catechol; it reads HIH.

This sequence belongs to the intradiol ring-cleavage dioxygenase family. Homodimer. The cofactor is Fe(3+).

The catalysed reaction is catechol + O2 = cis,cis-muconate + 2 H(+). Its pathway is aromatic compound metabolism; beta-ketoadipate pathway; 5-oxo-4,5-dihydro-2-furylacetate from catechol: step 1/3. This chain is Catechol 1,2-dioxygenase, found in Acinetobacter baylyi (strain ATCC 33305 / BD413 / ADP1).